Reading from the N-terminus, the 1294-residue chain is Ethylene-insensitive protein 2 (1294 aa).

Residues Met-1–Leu-12 are Cytoplasmic-facing. Residues Gly-13–Ile-33 traverse the membrane as a helical segment. At Asp-34–Tyr-50 the chain is on the extracellular side. The chain crosses the membrane as a helical span at residues Asp-51–Ala-71. Topologically, residues Arg-72–Ala-105 are cytoplasmic. Residues Ile-106–Val-126 traverse the membrane as a helical segment. A topological domain (extracellular) is located at residue Glu-127. The helical transmembrane segment at Leu-128–Phe-148 threads the bilayer. Topologically, residues Leu-149 to Asn-155 are cytoplasmic. A helical transmembrane segment spans residues Thr-156–Ser-176. The Extracellular portion of the chain corresponds to Gln-177 to Glu-194. The chain crosses the membrane as a helical span at residues Ser-195–His-215. Over Ser-216–His-237 the chain is Cytoplasmic. Residues Leu-238–Ala-258 traverse the membrane as a helical segment. At Ala-259–Pro-287 the chain is on the extracellular side. The chain crosses the membrane as a helical span at residues Leu-288–Trp-308. The Cytoplasmic segment spans residues Ala-309–Arg-334. The next 2 membrane-spanning stretches (helical) occupy residues Ile-335–Gln-355 and Leu-356–Phe-376. At Arg-377–Leu-397 the chain is on the cytoplasmic side. Residues Ala-398 to Phe-418 traverse the membrane as a helical segment. The Extracellular segment spans residues Gly-419–Thr-440. Residues Thr-441–Leu-461 form a helical membrane-spanning segment. Residues Lys-462 to Gly-1294 are Cytoplasmic-facing. Disordered stretches follow at residues Thr-534–Lys-561 and Glu-623–Arg-662. Basic and acidic residues predominate over residues Gln-536–Val-550. 3 positions are modified to phosphoserine: Ser-645, Ser-659, and Ser-757. Thr-819 is subject to Phosphothreonine. At Ser-924 the chain carries Phosphoserine. Positions Leu-1262–Leu-1269 match the Nuclear localization signal motif. The interval Leu-1269–Gly-1294 is disordered. Ser-1283 is subject to Phosphoserine.

The protein belongs to the NRAMP (TC 2.A.55) family. As to quaternary structure, interacts (via NLS) with ETR1. Interacts (via C-terminus) with EER5 and the COP9 signalosome subunits CSN3, CSN6A and CSN6B. Interacts with ETP1 and ETP2. Interacts with CTR1. Interacts with all members of the ethylene receptor family, including ETR1, ETR2, ERS1, ERS2 and EIN4. Binds to MRF3/ECIP1. In terms of assembly, interacts with several P-body components, such as XRN4/EIN5, PAB2, PAB4 and PAB8. Binds to ENAP1 in the presence of ethylene; this reaction facilitates its association with histone. Phosphorylated by CTR1 on at least 4 sites. Phosphorylation of Ser-645 and Ser-924 is involved in repressing EIN2 signaling. Loss of phosphorylation results in nuclear localization of the C-terminus of EIN2. Localized to the guard cells after methyl jasmonate treatment.

The protein resides in the endoplasmic reticulum membrane. It localises to the nucleus. It is found in the cytoplasm. Its function is as follows. Central factor in signaling pathways regulated by ethylene (ET) and involved in various processes including development, plant defense, senescence, nucleotide sugar flux, and tropisms. Necessary for ethylene-mediated gene regulation, and for the induction of some genes by ozone. Acts downstream of ET receptors, and upstream of ethylene regulated transcription factors. Required for cytokinin-mediated processes. Seems to be implicated in cross-talk between ET, jasmonate and other pathways. Probably not involved in iron uptake. Has a short half-life and undergoes rapid proteasome-mediated turnover in the absence of ethylene. Required for ethylene-induced EIN3 stabilization via proteasomal degradation of EBF1/EBF2 proteins. Regulates the leaf senescence induced by methyl jasmonate, ethylene and abscisic acid. Required during salt stress to confer resistance. In terms of biological role, trafficking signal inducing ethylene response. The nuclear localization is both necessary and sufficient to activate EIN3-mediated transcription and ethylene responses. Involved in ethylene (ET)-mediated signaling pathways by triggering histone acetylation of H3K14 and H3K23 in an ENAP1-dependent manner, thus influencing the expression of ethylene-responsive genes. Necessary and sufficient for 3'-UTR-mediated translational repression of EBF1 and EBF2 mRNAs. Ethylene induces EIN2-CEND to associate with 3' UTRs in cytoplasmic foci and target EBF1/2 mRNAs to cytoplasmic processing-body (P-body). MPK6 regulates the cleavage and nuclear translocation of EIN2-CEND under methyl jasmonate treatment. Required for EIN3 accumulation. The polypeptide is Ethylene-insensitive protein 2 (Arabidopsis thaliana (Mouse-ear cress)).